Here is a 548-residue protein sequence, read N- to C-terminus: Sterol esterase TGL1 (548 aa).

At methionine 1 the chain carries N-acetylmethionine; partial. Topologically, residues methionine 1–aspartate 13 are lumenal. Residues tyrosine 14–proline 34 traverse the membrane as a helical segment. The Cytoplasmic portion of the chain corresponds to glutamine 35–glutamate 548. Positions valine 107–glycine 402 constitute an AB hydrolase-1 domain. The GXSXG motif lies at glycine 199 to glycine 203. Serine 201 (nucleophile) is an active-site residue. Lysine 246 participates in a covalent cross-link: Glycyl lysine isopeptide (Lys-Gly) (interchain with G-Cter in ubiquitin). Residues aspartate 369 and histidine 396 each act as charge relay system in the active site. Disordered stretches follow at residues threonine 449–glutamate 477 and isoleucine 496–glutamine 516. A phosphoserine mark is found at serine 462 and serine 466. Residues asparagine 502–glutamine 516 show a composition bias toward basic and acidic residues. Serine 521 and serine 538 each carry phosphoserine. The segment at lysine 528 to glutamate 548 is disordered. Threonine 539 carries the phosphothreonine modification.

The protein belongs to the AB hydrolase superfamily. Post-translationally, not N-glycosylated.

The protein resides in the lipid droplet. It localises to the membrane. It carries out the reaction a sterol ester + H2O = a sterol + a fatty acid + H(+). Its function is as follows. Mediates the hydrolysis of steryl esters (SE). Preferentially hydrolyzes ergosteryl and zymosteryl esters. Required for mobilization of SEs from lipid particles/droplets, thereby playing a central role in lipid metabolism and sterol homeostasis. Sterol intermediates stored in SE and set free by SE hydrolases are recycled to the sterol biosynthetic pathway and converted to the final product, ergosterol, in the endoplasmic reticulum. Also has weak lipase activity toward triglycerides at neutral pH, however, the physiological relevance of this activity is unclear. In Saccharomyces cerevisiae (strain ATCC 204508 / S288c) (Baker's yeast), this protein is Sterol esterase TGL1 (TGL1).